The primary structure comprises 333 residues: Beta-ketoacyl-[acyl-carrier-protein] synthase III (333 aa).

Residues C116 and H258 contribute to the active site. Residues 259 to 263 (QANKR) are ACP-binding. N288 is an active-site residue.

Belongs to the thiolase-like superfamily. FabH family. As to quaternary structure, homodimer.

It is found in the cytoplasm. The enzyme catalyses malonyl-[ACP] + acetyl-CoA + H(+) = 3-oxobutanoyl-[ACP] + CO2 + CoA. The protein operates within lipid metabolism; fatty acid biosynthesis. Catalyzes the condensation reaction of fatty acid synthesis by the addition to an acyl acceptor of two carbons from malonyl-ACP. Catalyzes the first condensation reaction which initiates fatty acid synthesis and may therefore play a role in governing the total rate of fatty acid production. Possesses both acetoacetyl-ACP synthase and acetyl transacylase activities. Its substrate specificity determines the biosynthesis of branched-chain and/or straight-chain of fatty acids. The chain is Beta-ketoacyl-[acyl-carrier-protein] synthase III from Koribacter versatilis (strain Ellin345).